Here is a 503-residue protein sequence, read N- to C-terminus: Probable cytosol aminopeptidase (503 aa).

Residues Lys274 and Asp279 each contribute to the Mn(2+) site. Lys286 is an active-site residue. Mn(2+)-binding residues include Asp297, Asp356, and Glu358. The active site involves Arg360.

It belongs to the peptidase M17 family. The cofactor is Mn(2+).

It is found in the cytoplasm. The catalysed reaction is Release of an N-terminal amino acid, Xaa-|-Yaa-, in which Xaa is preferably Leu, but may be other amino acids including Pro although not Arg or Lys, and Yaa may be Pro. Amino acid amides and methyl esters are also readily hydrolyzed, but rates on arylamides are exceedingly low.. It catalyses the reaction Release of an N-terminal amino acid, preferentially leucine, but not glutamic or aspartic acids.. Functionally, presumably involved in the processing and regular turnover of intracellular proteins. Catalyzes the removal of unsubstituted N-terminal amino acids from various peptides. The chain is Probable cytosol aminopeptidase from Burkholderia pseudomallei (strain 1710b).